The primary structure comprises 592 residues: Serine/threonine-protein kinase ksg1 (592 aa).

Positions Met1–Thr10 are enriched in polar residues. The disordered stretch occupies residues Met1–Asn92. Acidic residues predominate over residues Glu11–Ser22. The span at Ser27–Asn37 shows a compositional bias: basic and acidic residues. Over residues Pro42 to Ser68 the composition is skewed to polar residues. Ser64 and Ser69 each carry phosphoserine. The span at Ser80 to Asn92 shows a compositional bias: polar residues. The Protein kinase domain maps to Phe99 to Phe366. ATP is bound by residues Ser109–Ser111 and Lys128. Residues Leu130–Phe175 are PIF-pocket. ATP contacts are provided by residues Ser178–Ala180 and Glu184. The active-site Proton acceptor is the Asp223. ATP contacts are provided by Glu227 and Asp241. Positions Ile461–Ser572 constitute a PH domain.

The protein belongs to the protein kinase superfamily. AGC Ser/Thr protein kinase family. PDPK1 subfamily.

It is found in the cytoplasm. It catalyses the reaction L-seryl-[protein] + ATP = O-phospho-L-seryl-[protein] + ADP + H(+). The catalysed reaction is L-threonyl-[protein] + ATP = O-phospho-L-threonyl-[protein] + ADP + H(+). Functionally, involved in the control of sexual development and cell growth under stressed conditions. Phosphorylates AGC kinase gad8 at 'Thr-387', activating gad8 kinase activity and promoting sexual development. Phosphorylates AGC kinase psk1 at 'Ser-248', activating psk1 kinase activity and promoting phosphorylation of ribosomal protein S6. In Schizosaccharomyces pombe (strain 972 / ATCC 24843) (Fission yeast), this protein is Serine/threonine-protein kinase ksg1.